We begin with the raw amino-acid sequence, 81 residues long: MKAGIHPDYKKVVFMDTNTGFKFLSGSTKGSNETVEWEDGNTYPLLKVEISSDSHPFYTGRQKFATADGRVDRFNKKYGLK.

It belongs to the bacterial ribosomal protein bL31 family. Type B subfamily. As to quaternary structure, part of the 50S ribosomal subunit.

In Bacillus anthracis (strain A0248), this protein is Large ribosomal subunit protein bL31B.